The primary structure comprises 196 residues: ATP-dependent Clp protease proteolytic subunit (196 aa).

The Nucleophile role is filled by serine 97. Residue histidine 122 is part of the active site.

This sequence belongs to the peptidase S14 family. In terms of assembly, fourteen ClpP subunits assemble into 2 heptameric rings which stack back to back to give a disk-like structure with a central cavity, resembling the structure of eukaryotic proteasomes.

The protein localises to the cytoplasm. It carries out the reaction Hydrolysis of proteins to small peptides in the presence of ATP and magnesium. alpha-casein is the usual test substrate. In the absence of ATP, only oligopeptides shorter than five residues are hydrolyzed (such as succinyl-Leu-Tyr-|-NHMec, and Leu-Tyr-Leu-|-Tyr-Trp, in which cleavage of the -Tyr-|-Leu- and -Tyr-|-Trp bonds also occurs).. Functionally, cleaves peptides in various proteins in a process that requires ATP hydrolysis. Has a chymotrypsin-like activity. Plays a major role in the degradation of misfolded proteins. The protein is ATP-dependent Clp protease proteolytic subunit of Lacticaseibacillus paracasei (strain ATCC 334 / BCRC 17002 / CCUG 31169 / CIP 107868 / KCTC 3260 / NRRL B-441) (Lactobacillus paracasei).